A 165-amino-acid chain; its full sequence is Large ribosomal subunit protein uL10 (165 aa).

This sequence belongs to the universal ribosomal protein uL10 family. Part of the ribosomal stalk of the 50S ribosomal subunit. The N-terminus interacts with L11 and the large rRNA to form the base of the stalk. The C-terminus forms an elongated spine to which L12 dimers bind in a sequential fashion forming a multimeric L10(L12)X complex.

In terms of biological role, forms part of the ribosomal stalk, playing a central role in the interaction of the ribosome with GTP-bound translation factors. This chain is Large ribosomal subunit protein uL10, found in Citrobacter koseri (strain ATCC BAA-895 / CDC 4225-83 / SGSC4696).